We begin with the raw amino-acid sequence, 277 residues long: Large ribosomal subunit protein uL2 (277 aa).

Disordered stretches follow at residues 38–58 (HRKG…GGGH) and 219–277 (TVRG…RKNK).

This sequence belongs to the universal ribosomal protein uL2 family. As to quaternary structure, part of the 50S ribosomal subunit. Forms a bridge to the 30S subunit in the 70S ribosome.

Its function is as follows. One of the primary rRNA binding proteins. Required for association of the 30S and 50S subunits to form the 70S ribosome, for tRNA binding and peptide bond formation. It has been suggested to have peptidyltransferase activity; this is somewhat controversial. Makes several contacts with the 16S rRNA in the 70S ribosome. The protein is Large ribosomal subunit protein uL2 of Bacillus pumilus (strain SAFR-032).